The following is a 621-amino-acid chain: Type 2 DNA topoisomerase 6 subunit B (621 aa).

Residues Asn48, Asp80, 101–102 (SR), 111–118 (GQQGIGIS), and Lys435 contribute to the ATP site.

This sequence belongs to the TOP6B family. As to quaternary structure, homodimer. Heterotetramer of two Top6A and two Top6B chains.

The enzyme catalyses ATP-dependent breakage, passage and rejoining of double-stranded DNA.. In terms of biological role, relaxes both positive and negative superturns and exhibits a strong decatenase activity. In Methanosarcina acetivorans (strain ATCC 35395 / DSM 2834 / JCM 12185 / C2A), this protein is Type 2 DNA topoisomerase 6 subunit B.